The sequence spans 242 residues: Probable transcriptional regulatory protein BURPS1710b_1385 (242 aa).

The protein belongs to the TACO1 family.

Its subcellular location is the cytoplasm. The sequence is that of Probable transcriptional regulatory protein BURPS1710b_1385 from Burkholderia pseudomallei (strain 1710b).